The chain runs to 544 residues: Cytochrome P450 monooxygenase cle2 (544 aa).

A helical transmembrane segment spans residues 19 to 39 (LGLLIGLSLILSITWTAYTIL). Positions 273-305 (RTQQVEQSIEKNTKNEKKEDEDEDQNEDEETPG) are disordered. The segment covering 280 to 290 (SIEKNTKNEKK) has biased composition (basic and acidic residues). The segment covering 291–304 (EDEDEDQNEDEETP) has biased composition (acidic residues). A heme-binding site is contributed by Cys478.

This sequence belongs to the cytochrome P450 family. Heme serves as cofactor.

The protein localises to the membrane. It participates in secondary metabolite biosynthesis; terpenoid biosynthesis. Functionally, cytochrome P450 monooxygenase; part of the cluster A that mediates the biosynthesis of chevalone E and its oxidized derivatives that possess a unique five-membered lactone ring and can synergistically enhance the cytotoxicity of doxorubicin (DOX) in breast cancer cells. Within the pathway, cle2 is involved in hydroxylation of the chavalone E scaffold at position C-20 and contributes with cle4 to the production of seven oxidation derivatives. The molecular scaffold is commonly biosynthesized by a series of enzymes including the non-reducing polyketide synthase (NR-PKS) cle1 that produces the alpha-pyrone triacetic acid lactone (TAL); The membrane-bound prenyltransferase cle5 that accepts TAL as its substrate to perform a C-3 geranylgeranylation reaction, in which the pathway-dedicated GGPS cle6 is required to provide GGPP, the other substrate of cle5; the FAD-dependent monooxygenase Cle3 that forms an (S)-epoxide ring at the terminal olefin of the geranylgeranyl group; and the terpene cyclase Cle7 that catalyzes the cyclization of the prenyl group that yields the pentacyclic pathway intermediate chevalone E. Chevalone E can derivatize into seven new oxidized analogs by the cytochrome P450 monooxygenases cle2 (acting at C-20) and cle4 (acting at C-11 and C-12). The chain is Cytochrome P450 monooxygenase cle2 from Aspergillus versicolor.